The following is a 236-amino-acid chain: Chloride intracellular channel protein 3 (236 aa).

Positions 1-88 are required for insertion into the membrane; that stretch reads MAETKLQLFV…EDFLEETLGP (88 aa). One can recognise a GST N-terminal domain in the interval 12 to 90; the sequence is ASEDGESVGH…FLEETLGPPD (79 aa). The G-site signature appears at 22–25; the sequence is CPSC. A disulfide bond links cysteine 22 and cysteine 25. Residues 24–44 form a helical membrane-spanning segment; the sequence is SCQRLFMVLLLKGVPFTLTTV. Phosphoserine occurs at positions 49 and 159. Positions 68-235 constitute a GST C-terminal domain; it reads DSDAKTDTLQ…LAAYRPAVHP (168 aa).

Belongs to the chloride channel CLIC family. In terms of assembly, associated with the C-terminal of MAPK15. In terms of tissue distribution, detected in placenta (at protein level). Widely expressed. High expression is found in placenta followed by lung and heart. Low expression in skeletal muscle, kidney and pancreas.

It is found in the nucleus. It localises to the membrane. The protein resides in the cell membrane. Its subcellular location is the cytoplasm. The protein localises to the secreted. It is found in the extracellular space. It localises to the extracellular matrix. It carries out the reaction chloride(in) = chloride(out). Inhibited by rapamycin, amphotericin B and IAA-94. Its function is as follows. In the soluble state, catalyzes glutaredoxin-like thiol disulfide exchange reactions with reduced glutathione as electron donor. Reduced in a glutathione-dependent way and secreted into the extracellular matrix where it activates TGM2 and promotes blood vessel growth during tissue remodeling as occurs in tumorigenesis. Can reduce specific cysteines in TGM2 and regulate cofactor binding. Can insert into membranes and form outwardly rectifying chloride ion channels. May participate in cellular growth control. The sequence is that of Chloride intracellular channel protein 3 from Homo sapiens (Human).